A 361-amino-acid polypeptide reads, in one-letter code: uncharacterized protein (361 aa).

WD repeat units follow at residues 57 to 96 (RHKKSCRNISVNESGTEFISVGSDGVLKIADTSTGRVSSK), 103 to 142 (KEISPYSVVQWIENDMVFATGDDNGCVSVWDKRTEGGIIH), 146 to 184 (DHIDYISSISPFEERYFVATSGDGVLSVIDARNFKKPIL), 187 to 229 (EQDE…DHTD), 237 to 275 (SHDFSIETITRADSDSLYVGGSDGCIRLLHILPNKYERI), and 280 to 318 (SSRSTVDAVDVTTEGNFLVSCSGTELAFWPVDQKEGDES). The tract at residues 311–361 (DQKEGDESSSSDNLDSDEDSSSDSEFSSPKKKKKVGNQGKKPLGTDFFDGL) is disordered.

It is found in the nucleus. Its subcellular location is the nucleolus. This is an uncharacterized protein from Schizosaccharomyces pombe (strain 972 / ATCC 24843) (Fission yeast).